Here is a 91-residue protein sequence, read N- to C-terminus: Hepcidin-2 (91 aa).

The N-terminal stretch at Met1 to Ala24 is a signal peptide. Residues Val25–Thr64 constitute a propeptide that is removed on maturation. 4 disulfides stabilise this stretch: Cys73–Cys89, Cys76–Cys79, Cys77–Cys85, and Cys80–Cys88.

The protein belongs to the hepcidin family.

It localises to the secreted. Seems to act as a signaling molecule involved in the maintenance of iron homeostasis. Seems to be required in conjunction with HFE to regulate both intestinal iron absorption and iron storage in macrophages. May also have antimicrobial activity. The sequence is that of Hepcidin-2 (hamp2) from Danio rerio (Zebrafish).